Here is a 184-residue protein sequence, read N- to C-terminus: ATP-dependent protease subunit HslV (184 aa).

T12 is a catalytic residue. Positions 166, 169, and 172 each coordinate Na(+).

Belongs to the peptidase T1B family. HslV subfamily. In terms of assembly, a double ring-shaped homohexamer of HslV is capped on each side by a ring-shaped HslU homohexamer. The assembly of the HslU/HslV complex is dependent on binding of ATP.

It is found in the cytoplasm. It catalyses the reaction ATP-dependent cleavage of peptide bonds with broad specificity.. Allosterically activated by HslU binding. In terms of biological role, protease subunit of a proteasome-like degradation complex believed to be a general protein degrading machinery. This Nitrobacter winogradskyi (strain ATCC 25391 / DSM 10237 / CIP 104748 / NCIMB 11846 / Nb-255) protein is ATP-dependent protease subunit HslV.